The following is a 386-amino-acid chain: Innexin inx4 (386 aa).

Residues methionine 1–aspartate 21 lie on the Cytoplasmic side of the membrane. Residues leucine 22–leucine 42 traverse the membrane as a helical segment. At serine 43–tyrosine 111 the chain is on the extracellular side. Residues glutamine 112 to tryptophan 132 traverse the membrane as a helical segment. The Cytoplasmic portion of the chain corresponds to lysine 133–threonine 187. The chain crosses the membrane as a helical span at residues leucine 188 to phenylalanine 208. Topologically, residues tryptophan 209–alanine 272 are extracellular. Residues phenylalanine 273 to isoleucine 293 traverse the membrane as a helical segment. Topologically, residues valine 294 to valine 386 are cytoplasmic. The tract at residues histidine 358–valine 386 is disordered. Positions phenylalanine 374–valine 386 are enriched in acidic residues.

This sequence belongs to the pannexin family.

It is found in the cell membrane. It localises to the cell junction. The protein resides in the gap junction. Its function is as follows. Structural component of gap junctions. Required for normal development of ovary. Required for normal egg production after blood meal. Required for normal development of testis. Functionally, (Microbial infection) Modulates the development of Plasmodium falciparum oocysts. This Anopheles gambiae (African malaria mosquito) protein is Innexin inx4.